Here is a 373-residue protein sequence, read N- to C-terminus: MIRPDLSSLPAYVPGSTQPGALKLASNESSLSPLPSVSAVINDATSNLNRYPDMASGALRGKLAQWLGVDLDNVAVGNGSSALCQQLVQATCKDGDEVVYAWRSFEAYPILCKIAGAVGVGVPLKSGRHDLKAMSEAIGERTRLVFVCNPNNPTGTTVSRDEFREFMGRVPADVTVVLDEAYVEYNRDAESPVALEELQRYPNLAVCRTFSKAYGLAGLRLGYLVGPAELVEAVNKVGIPFGVNALAQAAGIASVEAQGELAERVDATVAERERVEAYLAGVAPAGADEPLTYPSQANFVWLNAGERAEALDEALKREGVIARCFAGEGVRVTVTTAEETDVLLRALERALPAVGLVEAGAESAGLQASPQAD.

Lysine 212 bears the N6-(pyridoxal phosphate)lysine mark.

The protein belongs to the class-II pyridoxal-phosphate-dependent aminotransferase family. In terms of assembly, homodimer. It depends on pyridoxal 5'-phosphate as a cofactor.

The enzyme catalyses an aromatic L-alpha-amino acid + 2-oxoglutarate = an aromatic oxo-acid + L-glutamate. Aminotransferase that catalyzes the conversion of aromatic amino acids and 2-oxoglutarate into corresponding aromatic oxo acids and L-glutamate. This is Aromatic amino acid aminotransferase from Corynebacterium jeikeium (strain K411).